The following is a 215-amino-acid chain: Adenylate kinase (215 aa).

Residue 10 to 15 (GAGKGT) participates in ATP binding. The NMP stretch occupies residues 30-59 (STGDMFRAAIKDQTPLGQEAKSYMDKGELV). AMP is bound by residues T31, R36, 57–59 (ELV), 85–88 (GFPR), and Q92. Residues 126-163 (GRRICPTCGATYHVIYNPPKVEGVCDIDGSALVQREDD) form an LID region. ATP is bound at residue R127. Zn(2+) is bound by residues C130 and C133. 136–137 (TY) lines the ATP pocket. Zn(2+)-binding residues include C150 and D153. Positions 160 and 171 each coordinate AMP. R199 contacts ATP.

The protein belongs to the adenylate kinase family. Monomer.

Its subcellular location is the cytoplasm. The enzyme catalyses AMP + ATP = 2 ADP. The protein operates within purine metabolism; AMP biosynthesis via salvage pathway; AMP from ADP: step 1/1. Its function is as follows. Catalyzes the reversible transfer of the terminal phosphate group between ATP and AMP. Plays an important role in cellular energy homeostasis and in adenine nucleotide metabolism. This chain is Adenylate kinase, found in Exiguobacterium sibiricum (strain DSM 17290 / CCUG 55495 / CIP 109462 / JCM 13490 / 255-15).